We begin with the raw amino-acid sequence, 276 residues long: UPF0761 membrane protein APL_1950 (276 aa).

The next 7 membrane-spanning stretches (helical) occupy residues 33–53, 90–110, 125–145, 147–167, 171–191, 203–223, and 239–259; these read TLAIVPLVMVVFSIFTAFPIF, MGIVSTIGLVVVALMLIQSID, IFISFLLYAVILFIAPLLAGG, IAISSYIFSMAIFNENGLLSF, LLQYTPFLLIWLLFTTVYWLV, LGAIVAAIFFTLGKQAFVWYI, and LPIMLLWIHLSWQVVLFGGLI.

This sequence belongs to the UPF0761 family.

The protein localises to the cell inner membrane. The chain is UPF0761 membrane protein APL_1950 from Actinobacillus pleuropneumoniae serotype 5b (strain L20).